Reading from the N-terminus, the 249-residue chain is Proline-rich antigen (249 aa).

Composition is skewed to pro residues over residues 1-20 and 38-87; these read MTDQPPPSGSNPTPAPPPPG and YPPP…PPGP. Residues 1 to 87 form a disordered region; sequence MTDQPPPSGS…GAYAPPPPGP (87 aa). The 1-1; approximate repeat unit spans residues 34 to 43; that stretch reads LGSAYPPPTA. The interval 34-85 is 5 X 10 AA tandem repeats of [PV]-G-G-S-Y-P-P-P-P-P; that stretch reads LGSAYPPPTAPPVGGSYPPPPPPGGSYPPPPPPGGSYPPPPPSTGAYAPPPP. 3 consecutive repeat copies span residues 46–55, 56–65, and 66–75. A 1-5; approximate repeat occupies 76 to 85; that stretch reads STGAYAPPPP. Residues 99 to 242 form the RDD domain; that stretch reads FWVTRVLAYV…KRQTLADKIM (144 aa). 2 tandem repeats follow at residues 101-123 and 134-156. The interval 101 to 156 is 2 X 23 AA approximate repeats; that stretch reads VTRVLAYVIDNIPATVLLGIGMLIQTLTKQEACVTDITQYNVNQYCATQPTGIGML. 3 helical membrane-spanning segments follow: residues 104 to 124, 151 to 171, and 212 to 232; these read VLAYVIDNIPATVLLGIGMLI, TGIGMLAFWFAWLMATAYLVW, and LAHFVDAVICCIGFLFPLWDS.

This sequence belongs to the mycobacterial Pra family.

It is found in the cell membrane. The chain is Proline-rich antigen (ag36) from Mycobacterium leprae (strain TN).